We begin with the raw amino-acid sequence, 250 residues long: Small ribosomal subunit protein uS2 (250 aa).

It belongs to the universal ribosomal protein uS2 family.

In Paraburkholderia phytofirmans (strain DSM 17436 / LMG 22146 / PsJN) (Burkholderia phytofirmans), this protein is Small ribosomal subunit protein uS2.